Reading from the N-terminus, the 284-residue chain is NAD kinase (284 aa).

The Proton acceptor role is filled by D67. NAD(+)-binding positions include 67-68 (DG), 141-142 (ND), R152, K169, D171, 182-187 (TGYSLS), and Q241.

This sequence belongs to the NAD kinase family. A divalent metal cation is required as a cofactor.

Its subcellular location is the cytoplasm. The catalysed reaction is NAD(+) + ATP = ADP + NADP(+) + H(+). Involved in the regulation of the intracellular balance of NAD and NADP, and is a key enzyme in the biosynthesis of NADP. Catalyzes specifically the phosphorylation on 2'-hydroxyl of the adenosine moiety of NAD to yield NADP. This chain is NAD kinase, found in Geotalea daltonii (strain DSM 22248 / JCM 15807 / FRC-32) (Geobacter daltonii).